The sequence spans 522 residues: Glycerol kinase (522 aa).

Threonine 15 serves as a coordination point for substrate. Arginine 19 is an ATP binding site. Residues 89-90 (RE), tyrosine 143, and 255-256 (DQ) contribute to the substrate site. Residues threonine 276, glycine 321, and 430–434 (GATAN) contribute to the ATP site.

Belongs to the FGGY kinase family. In terms of tissue distribution, highly expressed in germinating seeds and senescent leaves, and at lower levels in roots, leaves, flowers and siliques.

It is found in the cytoplasm. It localises to the cytosol. It catalyses the reaction glycerol + ATP = sn-glycerol 3-phosphate + ADP + H(+). It functions in the pathway polyol metabolism; glycerol degradation via glycerol kinase pathway; sn-glycerol 3-phosphate from glycerol: step 1/1. Its function is as follows. Key enzyme in the regulation of glycerol uptake and metabolism. Required for resistance to nonhost Pseudomonas bacteria and to the pathogenic fungus B.cinerea. The sequence is that of Glycerol kinase (GLPK) from Arabidopsis thaliana (Mouse-ear cress).